We begin with the raw amino-acid sequence, 158 residues long: Transcription elongation factor GreA (158 aa).

The stretch at 1–67 (MSNNIPLTKE…FIEGRIQELQ (67 aa)) forms a coiled coil.

It belongs to the GreA/GreB family.

Necessary for efficient RNA polymerase transcription elongation past template-encoded arresting sites. The arresting sites in DNA have the property of trapping a certain fraction of elongating RNA polymerases that pass through, resulting in locked ternary complexes. Cleavage of the nascent transcript by cleavage factors such as GreA or GreB allows the resumption of elongation from the new 3'terminus. GreA releases sequences of 2 to 3 nucleotides. The polypeptide is Transcription elongation factor GreA (Trichlorobacter lovleyi (strain ATCC BAA-1151 / DSM 17278 / SZ) (Geobacter lovleyi)).